The chain runs to 299 residues: Inactive recombination-promoting nuclease-like protein RpnE (299 aa).

The protein belongs to the Rpn/YhgA-like nuclease family.

In terms of biological role, upon expression has no effect on RecA-independent DNA recombination, cell viability or DNA damage. The polypeptide is Inactive recombination-promoting nuclease-like protein RpnE (yfaD) (Escherichia coli (strain K12)).